We begin with the raw amino-acid sequence, 390 residues long: 5-hydroxytryptamine receptor 1B (390 aa).

The tract at residues 1 to 21 (MEETGAQCAPPPPAGSQTGVS) is disordered. The Extracellular segment spans residues 1 to 46 (MEETGAQCAPPPPAGSQTGVSQVNLSAAPSHNCSTEGYVYQDSVAL). N-linked (GlcNAc...) asparagine glycosylation is found at N24 and N32. A helical membrane pass occupies residues 47–72 (PWKVLLVVLLALITLATTLSNAFVIA). Over 73-86 (TVYRTRKLHTPANY) the chain is Cytoplasmic. The helical transmembrane segment at 87–111 (LIASLAVTDLLVSILVMPISTMYVV) threads the bilayer. Residues 112-119 (TGRWTLGQ) are Extracellular-facing. A helical membrane pass occupies residues 120–145 (VVCDFWLSSDITCCTASILHLCVIAL). C122 and C199 form a disulfide bridge. Ergotamine-binding residues include D129 and T134. Residues 146–148 (DRY) carry the DRY motif; important for ligand-induced conformation changes and signaling motif. Over 146–165 (DRYWAITDAVEYSAKRTPKR) the chain is Cytoplasmic. Residues 166–184 (AAVMIALVWVFSISISLPP) form a helical membrane-spanning segment. Residues 185-205 (FFWRQAKAEEEVLDCLVNTDH) are Extracellular-facing. V201 lines the ergotamine pocket. A helical membrane pass occupies residues 206-229 (ILYTVYSTVGAFYFPTLLLIALYS). Residues 230–315 (RIYVEARSRI…AARERKATKT (86 aa)) lie on the Cytoplasmic side of the membrane. A disordered region spans residues 251 to 282 (LTRAQLMTDSPGSTSSVTSINSRAPDVPSESG). Positions 255-272 (QLMTDSPGSTSSVTSINS) are enriched in polar residues. Residues 316 to 337 (LGIILGAFIVCWLPFFIISLVM) traverse the membrane as a helical segment. Residues 338–347 (PICKDACWFH) are Extracellular-facing. The chain crosses the membrane as a helical span at residues 348–370 (LAIFDFFTWLGYLNSLINPIIYT). Residues 365–369 (NPIIY) carry the NPxxY motif; important for ligand-induced conformation changes and signaling motif. Topologically, residues 371-390 (MSNEDFKQAFHKLIRFKCAS) are cytoplasmic. The S-palmitoyl cysteine moiety is linked to residue C388.

The protein belongs to the G-protein coupled receptor 1 family. As to quaternary structure, homodimer. Heterodimer with HTR1D. Post-translationally, phosphorylated. Desensitization of the receptor may be mediated by its phosphorylation. In terms of processing, palmitoylated.

It is found in the cell membrane. Functionally, G-protein coupled receptor for 5-hydroxytryptamine (serotonin). Also functions as a receptor for ergot alkaloid derivatives, various anxiolytic and antidepressant drugs and other psychoactive substances, such as lysergic acid diethylamide (LSD). Ligand binding causes a conformation change that triggers signaling via guanine nucleotide-binding proteins (G proteins) and modulates the activity of downstream effectors, such as adenylate cyclase. HTR1B is coupled to G(i)/G(o) G alpha proteins and mediates inhibitory neurotransmission by inhibiting adenylate cyclase activity. Arrestin family members inhibit signaling via G proteins and mediate activation of alternative signaling pathways. Regulates the release of 5-hydroxytryptamine, dopamine and acetylcholine in the brain, and thereby affects neural activity, nociceptive processing, pain perception, mood and behavior. Besides, plays a role in vasoconstriction of cerebral arteries. This chain is 5-hydroxytryptamine receptor 1B (HTR1B), found in Equus caballus (Horse).